A 74-amino-acid polypeptide reads, in one-letter code: uncharacterized protein (74 aa).

A signal peptide spans 1–25 (MMMTDLPENIRKTAVALLRLGEATA).

This is an uncharacterized protein from Archaeoglobus fulgidus (strain ATCC 49558 / DSM 4304 / JCM 9628 / NBRC 100126 / VC-16).